The chain runs to 120 residues: Large ribosomal subunit protein uL18 (120 aa).

Belongs to the universal ribosomal protein uL18 family. In terms of assembly, part of the 50S ribosomal subunit; part of the 5S rRNA/L5/L18/L25 subcomplex. Contacts the 5S and 23S rRNAs.

This is one of the proteins that bind and probably mediate the attachment of the 5S RNA into the large ribosomal subunit, where it forms part of the central protuberance. This chain is Large ribosomal subunit protein uL18, found in Bartonella bacilliformis (strain ATCC 35685 / KC583 / Herrer 020/F12,63).